A 188-amino-acid chain; its full sequence is Peptidyl-tRNA hydrolase (188 aa).

TRNA is bound at residue Phe-15. Catalysis depends on His-20, which acts as the Proton acceptor. TRNA contacts are provided by Tyr-64, Asn-66, and Asn-112.

The protein belongs to the PTH family. Monomer.

The protein resides in the cytoplasm. It carries out the reaction an N-acyl-L-alpha-aminoacyl-tRNA + H2O = an N-acyl-L-amino acid + a tRNA + H(+). Its function is as follows. Hydrolyzes ribosome-free peptidyl-tRNAs (with 1 or more amino acids incorporated), which drop off the ribosome during protein synthesis, or as a result of ribosome stalling. Functionally, catalyzes the release of premature peptidyl moieties from peptidyl-tRNA molecules trapped in stalled 50S ribosomal subunits, and thus maintains levels of free tRNAs and 50S ribosomes. This is Peptidyl-tRNA hydrolase from Borreliella burgdorferi (strain ATCC 35210 / DSM 4680 / CIP 102532 / B31) (Borrelia burgdorferi).